Consider the following 852-residue polypeptide: Kinesin-like protein KIF18B (852 aa).

A Kinesin motor domain is found at 7–351; it reads TLQVVVRVRP…LKYADRAKEI (345 aa). 109–116 lines the ATP pocket; sequence GATGAGKT. Positions 366–393 form a coiled coil; the sequence is ISQYATICQQLQAEVAALRKKLQVYEGG. Disordered regions lie at residues 390 to 424 and 437 to 485; these read YEGGGQPPPQDLPGSPKSGPPPEHQPCTPELPAGP and QVER…RLTL. Phosphoserine is present on Ser404. The residue at position 417 (Thr417) is a Phosphothreonine. A compositionally biased stretch (acidic residues) spans 451 to 461; sequence QSPEDEDEGPA. Phosphoserine occurs at positions 452, 480, and 558. Disordered regions lie at residues 575–594 and 602–689; these read IPVPSPLCPEPPGYTGPVTR and GPLH…SPRV. The span at 577-588 shows a compositional bias: pro residues; that stretch reads VPSPLCPEPPGY. Residues 624–632 carry the Nuclear localization signal motif; sequence PMEKKRRRP. A phosphoserine mark is found at Ser633 and Ser639. The short motif at 653–656 is the MAPRE1-binding element; sequence SFLP. A Phosphoserine modification is found at Ser662. Polar residues predominate over residues 664-673; sequence PDTQPSQGPS. Thr674 bears the Phosphothreonine mark. A KIF2C-binding region spans residues 711-736; sequence TPLALPTRDLNATFDLSEEPPSKPSF. Residues 767-798 form a disordered region; that stretch reads MKGPKPTSSLPGTSACKKKRVASSSVSHGRSR. Short sequence motifs (MAPRE1-binding) lie at residues 774 to 777 and 800 to 803; these read SSLP and ARLP. At Ser822 the chain carries Phosphoserine.

This sequence belongs to the TRAFAC class myosin-kinesin ATPase superfamily. Kinesin family. Interacts with MAPRE1; this interaction is required for efficient accumulation at microtubule plus ends. Interacts with KIF2C at microtubule tips; this interaction increases the affinity of both partners for microtubule plus ends and is required for robust microtubule depolymerization. KIF2C phosphorylation by AURKA or AURKB strongly reduces KIF18B-binding. As to expression, shows a prominent expression in the amygdala.

Its subcellular location is the nucleus. It is found in the cytoplasm. The protein localises to the cytoskeleton. Its function is as follows. In complex with KIF2C, constitutes the major microtubule plus-end depolymerizing activity in mitotic cells. Its major role may be to transport KIF2C and/or MAPRE1 along microtubules. The sequence is that of Kinesin-like protein KIF18B (KIF18B) from Homo sapiens (Human).